Here is a 1193-residue protein sequence, read N- to C-terminus: Pyruvate carboxylase (1193 aa).

A Biotin carboxylation domain is found at 41 to 493; sequence QFQKILVANR…WTTFIDDTTE (453 aa). Residues Lys-159, Glu-243, and His-278 each coordinate ATP. An ATP-grasp domain is found at 163 to 360; that stretch reads RQLAIRCNVP…IVAAQIQIAA (198 aa). Residue Arg-335 is part of the active site. The region spanning 579–847 is the Pyruvate carboxyltransferase domain; it reads CLIMDTTWRD…DPGLNSAHVR (269 aa). Residues 587–591 and Arg-660 each bind substrate; that span reads RDAHQ. Asp-588 is a binding site for a divalent metal cation. Lys-756, His-786, and His-788 together coordinate a divalent metal cation. At Lys-756 the chain carries N6-carboxylysine. Position 921 (Thr-921) interacts with substrate. Positions 1116-1191 constitute a Biotinyl-binding domain; sequence KADVGDSSQV…DGQDLVCKIT (76 aa). Lys-1157 bears the N6-biotinyllysine mark.

Biotin serves as cofactor. It depends on Zn(2+) as a cofactor.

It localises to the cytoplasm. It carries out the reaction hydrogencarbonate + pyruvate + ATP = oxaloacetate + ADP + phosphate + H(+). It functions in the pathway carbohydrate biosynthesis; gluconeogenesis. In terms of biological role, pyruvate carboxylase catalyzes a 2-step reaction, involving the ATP-dependent carboxylation of the covalently attached biotin in the first step and the transfer of the carboxyl group to pyruvate in the second. This Aspergillus terreus (strain NIH 2624 / FGSC A1156) protein is Pyruvate carboxylase (pyc).